Here is a 180-residue protein sequence, read N- to C-terminus: Large ribosomal subunit protein uL6 (180 aa).

This sequence belongs to the universal ribosomal protein uL6 family. In terms of assembly, part of the 50S ribosomal subunit.

This protein binds to the 23S rRNA, and is important in its secondary structure. It is located near the subunit interface in the base of the L7/L12 stalk, and near the tRNA binding site of the peptidyltransferase center. This is Large ribosomal subunit protein uL6 from Lachnoclostridium phytofermentans (strain ATCC 700394 / DSM 18823 / ISDg) (Clostridium phytofermentans).